We begin with the raw amino-acid sequence, 279 residues long: Energy-coupling factor transporter ATP-binding protein EcfA (279 aa).

The ABC transporter domain maps to 4–239 (VETKDLYFRY…VETIRKANLR (236 aa)). 37–44 (GPNGAGKS) is an ATP binding site.

Belongs to the ABC transporter superfamily. Energy-coupling factor EcfA family. As to quaternary structure, forms a stable energy-coupling factor (ECF) transporter complex composed of 2 membrane-embedded substrate-binding proteins (S component), 2 ATP-binding proteins (A component) and 2 transmembrane proteins (T component).

It is found in the cell membrane. Its function is as follows. ATP-binding (A) component of a common energy-coupling factor (ECF) ABC-transporter complex. Unlike classic ABC transporters this ECF transporter provides the energy necessary to transport a number of different substrates. The sequence is that of Energy-coupling factor transporter ATP-binding protein EcfA from Methanocaldococcus jannaschii (strain ATCC 43067 / DSM 2661 / JAL-1 / JCM 10045 / NBRC 100440) (Methanococcus jannaschii).